The chain runs to 139 residues: Sec-independent protein translocase protein TatB (139 aa).

The helical transmembrane segment at 1 to 21 threads the bilayer; it reads MFDMGFLELMLIGVVALLVLG. A compositionally biased stretch (basic and acidic residues) spans 66-86; the sequence is QQRKLDAGLGKVRDEVERHGD. The segment at 66-139 is disordered; the sequence is QQRKLDAGLG…APSAKDSNAP (74 aa).

This sequence belongs to the TatB family. As to quaternary structure, the Tat system comprises two distinct complexes: a TatABC complex, containing multiple copies of TatA, TatB and TatC subunits, and a separate TatA complex, containing only TatA subunits. Substrates initially bind to the TatABC complex, which probably triggers association of the separate TatA complex to form the active translocon.

The protein resides in the cell inner membrane. Functionally, part of the twin-arginine translocation (Tat) system that transports large folded proteins containing a characteristic twin-arginine motif in their signal peptide across membranes. Together with TatC, TatB is part of a receptor directly interacting with Tat signal peptides. TatB may form an oligomeric binding site that transiently accommodates folded Tat precursor proteins before their translocation. In Chromohalobacter salexigens (strain ATCC BAA-138 / DSM 3043 / CIP 106854 / NCIMB 13768 / 1H11), this protein is Sec-independent protein translocase protein TatB.